A 147-amino-acid polypeptide reads, in one-letter code: uncharacterized protein (147 aa).

This is an uncharacterized protein from Acidianus convivator (ATV).